The following is a 131-amino-acid chain: Insulin-like 3 (131 aa).

A signal peptide spans 1–20; it reads MDPRLPAWALVLLGPALVFA. 3 cysteine pairs are disulfide-bonded: Cys-34-Cys-116, Cys-46-Cys-129, and Cys-115-Cys-120. A propeptide spans 58–104 (c peptide like); sequence PATGGDRELLQWLERRHLLHGLVADSNLTLGPGLQPLPQTSHHHRHH.

This sequence belongs to the insulin family. In terms of assembly, heterodimer of a B chain and an A chain linked by two disulfide bonds. In terms of tissue distribution, expressed in prenatal and postnatal Leydig cells. Found as well in the corpus luteum, trophoblast, fetal membranes and breast.

It is found in the secreted. In terms of biological role, seems to play a role in testicular function. May be a trophic hormone with a role in testicular descent in fetal life. Is a ligand for LGR8 receptor. This Homo sapiens (Human) protein is Insulin-like 3 (INSL3).